Reading from the N-terminus, the 406-residue chain is MSNKKKQLTVMGTVWDFWSVLKMFDKLYESKYISFYEPWLKGEIDKEKIILFNEKSKNPLLWPFKILKRTYKILKIIREFKPDLVITHHDDANVSIIPVILLNKIFKISNNTKFILWVRNNPIESYKEGLYSKIIILAYKYFYKYADIIIVQTQENKKIIESHFKSLKNKTKIVPNVYEIDKLQQLSNEPLEKQYRNIFKDSFVFINIGRLTEQKGQWFLIRSFKRVTEKYPNAKLIILGDGELKNKLQELINKLNLQNNVYLLGMQKNPFKFLKHSNCFVFSSLWEGLPNTVIEALSLNLPVISTDCKTGPREILCPELNISDKIDYPYYGKYGILTKPFSREFIWQDLNEKPLIEEEKMLADLMIKMIEDEDLRKRYSNGLERAKDFDIEKIIKEWKLLIEGTI.

This sequence belongs to the glycosyltransferase group 1 family. Glycosyltransferase 4 subfamily.

This is an uncharacterized protein from Methanocaldococcus jannaschii (strain ATCC 43067 / DSM 2661 / JAL-1 / JCM 10045 / NBRC 100440) (Methanococcus jannaschii).